We begin with the raw amino-acid sequence, 341 residues long: MHTDLDTDMDMDTETVALCSSSSRQASPLGTPTPEADTTLLKQKPEKLLAELDLSGPPPAPGVPRRRGSMPVPYKHQLRRAQAVDELDWPPQASPSGSSDSLGSGEAALTQKDGVFKVMLVGESGVGKSTLAGTFGGLQGDHAHEMENSEDTYERRIMVDKEEVTLIVYDIWEQGDAGGWLQDHCLQTGDAFLIVFSVTDRRGFSKVPETLLRLRAGRPHHDLPVILVGNKSDLARSREVSLEEGRHLAGTLSCKHIETSAALHHNTRELFEGAVRQIRLRRGRGHAGGQRPEPSSPDGPAPPTRRESLTKKAKRFLANLVPRNAKFFKQRSRSCHDLSVL.

Residues 1–13 (MHTDLDTDMDMDT) show a composition bias toward acidic residues. Disordered regions lie at residues 1-71 (MHTD…GSMP) and 84-106 (VDEL…GSGE). A compositionally biased stretch (polar residues) spans 18-30 (LCSSSSRQASPLG). Ser27 bears the Phosphoserine mark. Residues 90–106 (PPQASPSGSSDSLGSGE) show a composition bias toward low complexity. GTP is bound by residues 122–129 (GESGVGKS), 230–233 (NKSD), and 261–262 (AA). A disordered region spans residues 282-309 (RGRGHAGGQRPEPSSPDGPAPPTRRESL). A compositionally biased stretch (pro residues) spans 294-303 (PSSPDGPAPP). A Phosphoserine modification is found at Ser296.

Belongs to the small GTPase superfamily. RGK family.

It is found in the cell membrane. Its function is as follows. Binds GTP saturably and exhibits a low intrinsic rate of GTP hydrolysis. The sequence is that of GTP-binding protein REM 2 (Rem2) from Mus musculus (Mouse).